The primary structure comprises 118 residues: MTDLIPLEQAHCLPRKGSDHKLGEARLAELLPQVPGWELAEAGMALTRTFRFPDYCRTLAFVNALAWIAHREDHHPDLGVHYDRVVVRYSTHDVGGLSENDFICAAKTARLYDQGITG.

This sequence belongs to the pterin-4-alpha-carbinolamine dehydratase family.

The catalysed reaction is (4aS,6R)-4a-hydroxy-L-erythro-5,6,7,8-tetrahydrobiopterin = (6R)-L-erythro-6,7-dihydrobiopterin + H2O. In Xanthomonas oryzae pv. oryzae (strain PXO99A), this protein is Putative pterin-4-alpha-carbinolamine dehydratase.